Here is a 706-residue protein sequence, read N- to C-terminus: Fatty acid oxidation complex subunit alpha (706 aa).

An enoyl-CoA hydratase region spans residues 1-188 (MEKTFNLTRR…KMGLVNDVVP (188 aa)). Residues 308–706 (RKVKKAVILG…TMARENVSFF (399 aa)) are 3-hydroxyacyl-CoA dehydrogenase.

This sequence in the N-terminal section; belongs to the enoyl-CoA hydratase/isomerase family. In the central section; belongs to the 3-hydroxyacyl-CoA dehydrogenase family. As to quaternary structure, heterotetramer of two alpha chains (FadJ) and two beta chains (FadI).

The protein localises to the cytoplasm. The catalysed reaction is a (3S)-3-hydroxyacyl-CoA = a (2E)-enoyl-CoA + H2O. The enzyme catalyses a 4-saturated-(3S)-3-hydroxyacyl-CoA = a (3E)-enoyl-CoA + H2O. It carries out the reaction a (3S)-3-hydroxyacyl-CoA + NAD(+) = a 3-oxoacyl-CoA + NADH + H(+). It catalyses the reaction (3S)-3-hydroxybutanoyl-CoA = (3R)-3-hydroxybutanoyl-CoA. It functions in the pathway lipid metabolism; fatty acid beta-oxidation. Functionally, catalyzes the formation of a hydroxyacyl-CoA by addition of water on enoyl-CoA. Also exhibits 3-hydroxyacyl-CoA epimerase and 3-hydroxyacyl-CoA dehydrogenase activities. This chain is Fatty acid oxidation complex subunit alpha, found in Shewanella sp. (strain W3-18-1).